Here is a 327-residue protein sequence, read N- to C-terminus: Malate dehydrogenase (327 aa).

11–17 (GAAGQIA) is a binding site for NAD(+). The substrate site is built by Arg92 and Arg98. NAD(+)-binding positions include Asn105, Gln112, and 129-131 (VGN). Substrate-binding residues include Asn131 and Arg162. Catalysis depends on His187, which acts as the Proton acceptor.

It belongs to the LDH/MDH superfamily. MDH type 2 family.

It carries out the reaction (S)-malate + NAD(+) = oxaloacetate + NADH + H(+). Its function is as follows. Catalyzes the reversible oxidation of malate to oxaloacetate. The protein is Malate dehydrogenase of Nitrosospira multiformis (strain ATCC 25196 / NCIMB 11849 / C 71).